Consider the following 455-residue polypeptide: MHPFASYVLRTYYKATGWNEDNLYANLTRSSNAVLDFTVPRGLHFTVSKSPNPLFKTTYSMTAMPSLSGSLGYIFTSCDLNVLSSGTVRFKDMLDRFKVYDQPRRPEGKEEEWLAGERVDTRDYLLYGRFYLPSGRLDALYSTRLSPTVQLSVAAISDPISGTPVDGRRRTDPSNIMLNLQHDVGKWCTEYTYSAEDSMWGVRFLHNFGRLAPSSWETTNGENGTNTSAPGNASNSRAGVKRVDEEDAVEGGLRGRVSVGAELYFSAKERSAGVSTGIRFSTMPDATPPSAQIPPPSPFTPDPTTSGPSPALLNPRPYPQPPTTITALFNPMLGHIQSAYTARVSRDLALATRFDFNVYSYDSEWTMGAEWWLRRSPRSSTDSGEEGAEKPSYPSPLGEVHGVVKARASTNNDVSLMWEGRIRQMLVSLGVVSDLSSRAKPIKAIGIEVSYFSSE.

3 disordered regions span residues 216-249, 278-311, and 377-399; these read WETTNGENGTNTSAPGNASNSRAGVKRVDEEDAV, IRFSTMPDATPPSAQIPPPSPFTPDPTTSGPSPA, and PRSSTDSGEEGAEKPSYPSPLGE. Over residues 217 to 227 the composition is skewed to low complexity; that stretch reads ETTNGENGTNT. Residues 228 to 237 are compositionally biased toward polar residues; that stretch reads SAPGNASNSR. Pro residues predominate over residues 291 to 301; the sequence is AQIPPPSPFTP.

The protein belongs to the MDM10 family. As to quaternary structure, component of the ER-mitochondria encounter structure (ERMES) or MDM complex, composed of MMM1, MDM10, MDM12 and MDM34. Associates with the mitochondrial outer membrane sorting assembly machinery SAM(core) complex.

The protein resides in the mitochondrion outer membrane. Functionally, component of the ERMES/MDM complex, which serves as a molecular tether to connect the endoplasmic reticulum and mitochondria. Components of this complex are involved in the control of mitochondrial shape and protein biogenesis and may function in phospholipid exchange. MDM10 is involved in the late assembly steps of the general translocase of the mitochondrial outer membrane (TOM complex). Functions in the TOM40-specific route of the assembly of outer membrane beta-barrel proteins, including the association of TOM40 with the receptor TOM22 and small TOM proteins. Can associate with the SAM(core) complex as well as the MDM12-MMM1 complex, both involved in late steps of the major beta-barrel assembly pathway, that is responsible for biogenesis of all outer membrane beta-barrel proteins. May act as a switch that shuttles between both complexes and channels precursor proteins into the TOM40-specific pathway. Plays a role in mitochondrial morphology and in the inheritance of mitochondria. This is Mitochondrial distribution and morphology protein 10 from Coprinopsis cinerea (strain Okayama-7 / 130 / ATCC MYA-4618 / FGSC 9003) (Inky cap fungus).